The primary structure comprises 781 residues: Matrix non-peptidase homolog 1 (781 aa).

An N-terminal signal peptide occupies residues M1–G27. A glycan (N-linked (GlcNAc...) asparagine) is linked at N54. A compositionally biased stretch (low complexity) spans T63–S94. Residues T63 to T113 are disordered. 4 N-linked (GlcNAc...) asparagine glycosylation sites follow: N183, N341, N375, and N520.

This Caenorhabditis elegans protein is Matrix non-peptidase homolog 1 (mnp-1).